The chain runs to 358 residues: 1-deoxy-D-xylulose 5-phosphate reductoisomerase (358 aa).

NADPH contacts are provided by T7, G8, S9, I10, G31, N33, and N114. K115 is a 1-deoxy-D-xylulose 5-phosphate binding site. An NADPH-binding site is contributed by E116. A Mn(2+)-binding site is contributed by D134. 1-deoxy-D-xylulose 5-phosphate contacts are provided by S135, E136, S157, and H180. Mn(2+) is bound at residue E136. G186 contributes to the NADPH binding site. 1-deoxy-D-xylulose 5-phosphate-binding residues include S193, N198, K199, and E202. E202 provides a ligand contact to Mn(2+).

It belongs to the DXR family. The cofactor is Mg(2+). Requires Mn(2+) as cofactor.

The enzyme catalyses 2-C-methyl-D-erythritol 4-phosphate + NADP(+) = 1-deoxy-D-xylulose 5-phosphate + NADPH + H(+). Its pathway is isoprenoid biosynthesis; isopentenyl diphosphate biosynthesis via DXP pathway; isopentenyl diphosphate from 1-deoxy-D-xylulose 5-phosphate: step 1/6. Its function is as follows. Catalyzes the NADPH-dependent rearrangement and reduction of 1-deoxy-D-xylulose-5-phosphate (DXP) to 2-C-methyl-D-erythritol 4-phosphate (MEP). The polypeptide is 1-deoxy-D-xylulose 5-phosphate reductoisomerase (Wolinella succinogenes (strain ATCC 29543 / DSM 1740 / CCUG 13145 / JCM 31913 / LMG 7466 / NCTC 11488 / FDC 602W) (Vibrio succinogenes)).